A 295-amino-acid chain; its full sequence is Pyridoxal 5'-phosphate synthase subunit PdxS (295 aa).

Asp-25 serves as a coordination point for D-ribose 5-phosphate. The active-site Schiff-base intermediate with D-ribose 5-phosphate is Lys-82. D-ribose 5-phosphate is bound at residue Gly-154. D-glyceraldehyde 3-phosphate is bound at residue Arg-166. D-ribose 5-phosphate-binding positions include Gly-215 and 236 to 237 (GS).

The protein belongs to the PdxS/SNZ family. As to quaternary structure, in the presence of PdxT, forms a dodecamer of heterodimers.

The catalysed reaction is aldehydo-D-ribose 5-phosphate + D-glyceraldehyde 3-phosphate + L-glutamine = pyridoxal 5'-phosphate + L-glutamate + phosphate + 3 H2O + H(+). It participates in cofactor biosynthesis; pyridoxal 5'-phosphate biosynthesis. Functionally, catalyzes the formation of pyridoxal 5'-phosphate from ribose 5-phosphate (RBP), glyceraldehyde 3-phosphate (G3P) and ammonia. The ammonia is provided by the PdxT subunit. Can also use ribulose 5-phosphate and dihydroxyacetone phosphate as substrates, resulting from enzyme-catalyzed isomerization of RBP and G3P, respectively. The protein is Pyridoxal 5'-phosphate synthase subunit PdxS of Haemophilus ducreyi (strain 35000HP / ATCC 700724).